We begin with the raw amino-acid sequence, 246 residues long: Transmembrane and ubiquitin-like domain-containing protein 1 (246 aa).

The required to release iHOPS from membranes stretch occupies residues 2-30; it reads TLIEGVGDEVTVLFSVLACLLVLALAWVS. Residues 11 to 31 traverse the membrane as a helical segment; sequence VTVLFSVLACLLVLALAWVST. A disordered region spans residues 34 to 101; that stretch reads AEGGDPLPQP…TPPAPDSPQE (68 aa). Positions 40-50 are enriched in pro residues; it reads LPQPSGTPTPS. Threonine 71 bears the Phosphothreonine mark. Serine 73 bears the Phosphoserine mark. A Phosphothreonine modification is found at threonine 92. A phosphoserine mark is found at serine 98 and serine 127. The region spanning 103-176 is the Ubiquitin-like domain; it reads LVLRLKFLND…LHCHVSTRVG (74 aa). 2 helical membrane passes run 195 to 215 and 221 to 241; these read IGSLLLPLLLLLLLLLWYCQI and FPLTATLGLAGFTLLLSLLAF.

Interacts with EEF1A1, GRIA2, GRIP1, CAMLG, TUBG1. Interacts with NPM1 and CDKN2A; TMUB1 can enhance interaction between NPM1 and CDKN2A and is proposed to bridge the proteins; proposed to be mediated by iHOPS. Interacts with ERLIN2 and AMFR; TMUB1 promotes the interaction of ERLIN2 with AMFR. Processed by regulated intramembrane proteolysis (RIP)in the N-terminus to release iHOPS from membranes. As to expression, ubiquitously expressed with highest levels in mammary and thyroid glands, bone marrow and spleen; limited expression in cardiac, pancreatic and ovarian tissues.

Its subcellular location is the membrane. It is found in the postsynaptic cell membrane. It localises to the recycling endosome. The protein resides in the cytoplasm. The protein localises to the nucleus. Its subcellular location is the nucleolus. It is found in the cytoskeleton. It localises to the microtubule organizing center. The protein resides in the centrosome. Involved in sterol-regulated ubiquitination and degradation of HMG-CoA reductase HMGCR. Involved in positive regulation of AMPA-selective glutamate receptor GRIA2 recycling to the cell surface. Acts as a negative regulator of hepatocyte growth during regeneration. In terms of biological role, may contribute to the regulation of translation during cell-cycle progression. May contribute to the regulation of cell proliferation. May be involved in centrosome assembly. Modulates stabilization and nucleolar localization of tumor suppressor CDKN2A and enhances association between CDKN2A and NPM1. The chain is Transmembrane and ubiquitin-like domain-containing protein 1 (TMUB1) from Homo sapiens (Human).